We begin with the raw amino-acid sequence, 224 residues long: uncharacterized protein (224 aa).

The segment at 11 to 42 (YYCKYCQIFVKDTPFARRSHEQTYKHQDAIKK) adopts a Matrin-type zinc-finger fold. The segment covering 67–80 (ATATTASAVSSELA) has biased composition (low complexity). Disordered regions lie at residues 67–158 (ATAT…RNRE) and 172–224 (VKPK…YDQS). The span at 87–98 (KEHPKLRPSKKK) shows a compositional bias: basic residues. Positions 108–122 (TSSTETDTISTTHTS) are enriched in low complexity. A compositionally biased stretch (basic and acidic residues) spans 175 to 199 (KNLDKVPKLAENEGNKSLESKESNE). Over residues 203 to 216 (VFKKKKSGKLRTKS) the composition is skewed to basic residues.

It localises to the nucleus. The protein resides in the nucleolus. This is an uncharacterized protein from Schizosaccharomyces pombe (strain 972 / ATCC 24843) (Fission yeast).